We begin with the raw amino-acid sequence, 349 residues long: tRNA pseudouridine synthase D (349 aa).

Phenylalanine 27 serves as a coordination point for substrate. Aspartate 80 functions as the Nucleophile in the catalytic mechanism. Residue asparagine 129 coordinates substrate. Residues glycine 155–leucine 303 enclose the TRUD domain. Residue phenylalanine 329 participates in substrate binding.

This sequence belongs to the pseudouridine synthase TruD family.

It catalyses the reaction uridine(13) in tRNA = pseudouridine(13) in tRNA. Responsible for synthesis of pseudouridine from uracil-13 in transfer RNAs. This is tRNA pseudouridine synthase D from Escherichia coli O81 (strain ED1a).